The following is a 108-amino-acid chain: Small ribosomal subunit protein eS25 (108 aa).

The interval 1–36 (MAPKKAQAPPPSSKPAKSGGGKQKKKKWSKGKQKEK) is disordered. A compositionally biased stretch (basic residues) spans 22–31 (KQKKKKWSKG).

It belongs to the eukaryotic ribosomal protein eS25 family.

The sequence is that of Small ribosomal subunit protein eS25 (RPS25) from Solanum lycopersicum (Tomato).